The primary structure comprises 129 residues: MAKEILQNSAHASVRMQRISPRKARLVADLIRYKSATQAIVILKHTHKKASEIILKLLNSAIANATNNAGLDATKLYVTTILVNDGPTLKRFQPHSRGRAYAILKRTSHFFIELTEINNVEEINKKGDK.

Belongs to the universal ribosomal protein uL22 family. In terms of assembly, part of the 50S ribosomal subunit.

This protein binds specifically to 23S rRNA; its binding is stimulated by other ribosomal proteins, e.g. L4, L17, and L20. It is important during the early stages of 50S assembly. It makes multiple contacts with different domains of the 23S rRNA in the assembled 50S subunit and ribosome. In terms of biological role, the globular domain of the protein is located near the polypeptide exit tunnel on the outside of the subunit, while an extended beta-hairpin is found that lines the wall of the exit tunnel in the center of the 70S ribosome. This is Large ribosomal subunit protein uL22 from Metamycoplasma hominis (strain ATCC 23114 / DSM 25592 / NBRC 14850 / NCTC 10111 / PG21) (Mycoplasma hominis).